A 389-amino-acid chain; its full sequence is Glutamate 5-kinase (389 aa).

K16 is a binding site for ATP. Substrate is bound by residues S56, D143, and N155. Residue S175 to D176 participates in ATP binding. In terms of domain architecture, PUA spans A281–P358.

It belongs to the glutamate 5-kinase family.

Its subcellular location is the cytoplasm. The catalysed reaction is L-glutamate + ATP = L-glutamyl 5-phosphate + ADP. It functions in the pathway amino-acid biosynthesis; L-proline biosynthesis; L-glutamate 5-semialdehyde from L-glutamate: step 1/2. Functionally, catalyzes the transfer of a phosphate group to glutamate to form L-glutamate 5-phosphate. The protein is Glutamate 5-kinase of Rhizobium leguminosarum bv. trifolii (strain WSM2304).